We begin with the raw amino-acid sequence, 320 residues long: Agamous-like MADS-box protein AGL90 (320 aa).

The MADS-box domain occupies 1–59; that stretch reads MKKVKLSLIANERSRKTSFMKRKNGIFKKLHELSTLCGVQACALIYSPFIPVPESWPSR. The stretch at 80–115 forms a coiled coil; sequence KMMDQETHLMERITKAKEQLKNLAAENRELQVRRFM.

In terms of assembly, interacts with AGL62.

It localises to the nucleus. Probable transcription factor. This Arabidopsis thaliana (Mouse-ear cress) protein is Agamous-like MADS-box protein AGL90 (AGL90).